Reading from the N-terminus, the 505-residue chain is Megakaryocyte-associated tyrosine-protein kinase (505 aa).

Residues 46-108 (APGTQCMTKC…AAAALRHGEA (63 aa)) form the SH3 domain. The region spanning 120–209 (WFHGKISGQE…AICTKLVKPR (90 aa)) is the SH2 domain. In terms of domain architecture, Protein kinase spans 233–481 (LTLGAQIGEG…IVEKLGRELR (249 aa)). ATP contacts are provided by residues 239–247 (IGEGEFGAV) and K260. Residue D350 is the Proton acceptor of the active site. A disordered region spans residues 483 to 505 (VGVSAPAGGQEAEGSAPTRSQDP).

The protein belongs to the protein kinase superfamily. Tyr protein kinase family. CSK subfamily. Interacts with KIT. Most abundant in brain, and to a lesser extent in the spleen, the thymus and the liver. Also found in the T-cell lineage.

It localises to the cytoplasm. The protein resides in the membrane. The catalysed reaction is L-tyrosyl-[protein] + ATP = O-phospho-L-tyrosyl-[protein] + ADP + H(+). In terms of biological role, could play a significant role in the signal transduction of hematopoietic cells. May regulate tyrosine kinase activity of SRC-family members in brain by specifically phosphorylating their C-terminal regulatory tyrosine residue which acts as a negative regulatory site. It may play an inhibitory role in the control of T-cell proliferation. The protein is Megakaryocyte-associated tyrosine-protein kinase (Matk) of Mus musculus (Mouse).